The primary structure comprises 327 residues: tRNA uridine(34) hydroxylase (327 aa).

Residues 123 to 217 (SDPEVLLVDT…YLEEVKLEES (95 aa)) form the Rhodanese domain. The Cysteine persulfide intermediate role is filled by Cys-177.

Belongs to the TrhO family.

It carries out the reaction uridine(34) in tRNA + AH2 + O2 = 5-hydroxyuridine(34) in tRNA + A + H2O. Functionally, catalyzes oxygen-dependent 5-hydroxyuridine (ho5U) modification at position 34 in tRNAs. This chain is tRNA uridine(34) hydroxylase, found in Shewanella pealeana (strain ATCC 700345 / ANG-SQ1).